The primary structure comprises 1378 residues: DNA-directed RNA polymerase subunit beta (1378 aa).

Belongs to the RNA polymerase beta chain family. The RNAP catalytic core consists of 2 alpha, 1 beta, 1 beta' and 1 omega subunit. When a sigma factor is associated with the core the holoenzyme is formed, which can initiate transcription.

The enzyme catalyses RNA(n) + a ribonucleoside 5'-triphosphate = RNA(n+1) + diphosphate. Functionally, DNA-dependent RNA polymerase catalyzes the transcription of DNA into RNA using the four ribonucleoside triphosphates as substrates. This chain is DNA-directed RNA polymerase subunit beta, found in Dinoroseobacter shibae (strain DSM 16493 / NCIMB 14021 / DFL 12).